A 135-amino-acid chain; its full sequence is Lysozyme 2 (135 aa).

An N-terminal signal peptide occupies residues 1 to 18 (MNFLILFCVVASASVVYS). An I-type lysozyme domain is found at 19–135 (SISDQCLRCI…WRLVQAKGCS (117 aa)). Intrachain disulfides connect cysteine 24–cysteine 100, cysteine 29–cysteine 35, cysteine 40–cysteine 49, cysteine 62–cysteine 82, cysteine 72–cysteine 78, and cysteine 96–cysteine 114. The active-site Proton donor is glutamate 32. Aspartate 43 acts as the Nucleophile in catalysis. Position 55-61 (55-61 (KQGYWTD)) interacts with substrate. Substrate contacts are provided by residues tyrosine 86 and 107 to 109 (HNG).

As to expression, expressed in the epithelia of the basophil cells in the digestive tubules, but not in the epithelial cells lining the digestive ducts and stomach. Expressed at a much lower level in the style sac-midgut tissues. No expression detected in mantle, gills, labial palps or hemocytes.

It localises to the secreted. It carries out the reaction Hydrolysis of (1-&gt;4)-beta-linkages between N-acetylmuramic acid and N-acetyl-D-glucosamine residues in a peptidoglycan and between N-acetyl-D-glucosamine residues in chitodextrins.. Activity decreased by 80% by addition of 0.01 M calcium, zinc or magnesium. Activity only decreased by 17% by addition of ammonium, and by 2% by addition of sodium. The main role of this lysozyme is in digestion. Has antibacterial activity against the Gram-positive bacterium P.cerevisiae and the Gram-negative bacteria E.coli and V.vulnificus. Shows some chitinase activity but no isopeptidase activity. The chain is Lysozyme 2 from Crassostrea virginica (Eastern oyster).